The following is a 251-amino-acid chain: Tritrans,polycis-undecaprenyl-diphosphate synthase (geranylgeranyl-diphosphate specific) (251 aa).

Asp29 is a catalytic residue. Asp29 contributes to the Mg(2+) binding site. Substrate-binding positions include 30–33, Phe34, His46, and 74–76; these read GNRR and STE. Asn77 acts as the Proton acceptor in catalysis. Substrate contacts are provided by residues Phe78, Arg80, Arg200, and 206 to 208; that span reads RLS.

Belongs to the UPP synthase family. Homodimer. Mg(2+) is required as a cofactor.

It catalyses the reaction geranylgeranyl diphosphate + 7 isopentenyl diphosphate = tri-trans,hepta-cis-undecaprenyl diphosphate + 7 diphosphate. Its function is as follows. Catalyzes the sequential condensation of isopentenyl diphosphate (IPP) with geranylgeranyl diphosphate (GGPP) to yield (2Z,6Z,10Z,14Z,18Z,22Z,26Z,30E,34E,38E)-undecaprenyl diphosphate (tritrans,heptacis-UPP). It is probably the precursor of glycosyl carrier lipids. The chain is Tritrans,polycis-undecaprenyl-diphosphate synthase (geranylgeranyl-diphosphate specific) from Archaeoglobus fulgidus (strain ATCC 49558 / DSM 4304 / JCM 9628 / NBRC 100126 / VC-16).